Here is a 183-residue protein sequence, read N- to C-terminus: Adenine phosphoribosyltransferase (183 aa).

Belongs to the purine/pyrimidine phosphoribosyltransferase family. Homodimer.

The protein resides in the cytoplasm. The enzyme catalyses AMP + diphosphate = 5-phospho-alpha-D-ribose 1-diphosphate + adenine. It participates in purine metabolism; AMP biosynthesis via salvage pathway; AMP from adenine: step 1/1. In terms of biological role, catalyzes a salvage reaction resulting in the formation of AMP, that is energically less costly than de novo synthesis. This chain is Adenine phosphoribosyltransferase, found in Salmonella typhi.